Here is a 2615-residue protein sequence, read N- to C-terminus: Polycystin-1-like protein 1 (2615 aa).

At 1-1524 (MDVDEDQHAV…VSSISEFQSH (1524 aa)) the chain is on the extracellular side. Positions 17-93 (IQANPELCVS…GTNSFSNPPP (77 aa)) are disordered. N-linked (GlcNAc...) asparagine glycosylation is found at N224, N297, N306, N390, N440, N534, and N619. PKD domains are found at residues 291 to 373 (SVSV…VQKR) and 375 to 456 (MANR…VREP). The REJ domain maps to 457–1349 (CQPPPVKNMG…GEEDYLHKRN (893 aa)). The tract at residues 749–815 (SSKSDLPSNL…GEPMEEYSSL (67 aa)) is disordered. A compositionally biased stretch (polar residues) spans 778 to 789 (ALSNLGSISAES). Residues 1364–1512 (RFTGLSENSQ…SVLRRKLNAT (149 aa)) enclose the GAIN-B domain. Residue N1458 is glycosylated (N-linked (GlcNAc...) asparagine). A disulfide bridge connects residues C1468 and C1494. The GPS stretch occupies residues 1468 to 1512 (CVFWDKTEWRSEGPYPQPGSSPEKVNCSYHHLAPVSVLRRKLNAT). An N-linked (GlcNAc...) asparagine glycan is attached at N1510. A helical transmembrane segment spans residues 1525–1545 (PHNLLPGIFSAFLLVLYGILV). The Cytoplasmic segment spans residues 1546 to 1732 (SKSRYVDCHE…PPSRSYLHTQ (187 aa)). Positions 1573 to 1690 (QLYAVVIDTG…LGGHVLREFF (118 aa)) constitute a PLAT domain. Residues 1733–1753 (RLAVSFCLLCVYSCLTALVTV) traverse the membrane as a helical segment. Over 1754 to 1772 (RDHQQRPLDVGPTAITLEP) the chain is Extracellular. Residues 1773 to 1793 (FCMALLCTLLACPVAQLLSLL) form a helical membrane-spanning segment. Over 1794-1905 (FRCSKEARGD…ELGSQKSRVC (112 aa)) the chain is Cytoplasmic. Residues 1807 to 1840 (STQWPLRGVKTETPQGHDSSGRPDSRQPSPHPTS) form a disordered region. A helical transmembrane segment spans residues 1906-1926 (LLWSSSVAWAISGSASLACGL). Residues 1927–1950 (GTGFLGYWFVPAQCMWWLYLLLLS) are Extracellular-facing. The chain crosses the membrane as a helical span at residues 1951 to 1971 (LVCCAFITQPLMICLAALVFA). At 1972 to 2057 (WKRKHDSKFF…ERLRRESIMQ (86 aa)) the chain is on the cytoplasmic side. Residues 2058-2078 (AALRDMTTHSIMLLLLLFIAY) form a helical membrane-spanning segment. Residues 2079-2288 (GRFCPGEISL…IFYSDSALKY (210 aa)) are Extracellular-facing. A helical transmembrane segment spans residues 2289-2309 (LLMLSELLFLVLNVIHLCFQL). Over 2310-2332 (WGMTTKGILSYWRKPRHWLELSM) the chain is Cytoplasmic. The chain crosses the membrane as a helical span at residues 2333 to 2353 (VGVAIAYYAASGHLTTLAVNI). Residues 2354-2379 (TDQFHKGLYQRLVDIGLMVSWHQRAR) lie on the Extracellular side of the membrane. Residues 2380–2400 (CLQGILLFLWMLKYVHLLSSL) form a helical membrane-spanning segment. Residues 2401 to 2405 (STMTP) lie on the Cytoplasmic side of the membrane. Residues 2406 to 2426 (FSAVTCFPLFRVLLVGALLLA) form a helical membrane-spanning segment. Topologically, residues 2427–2483 (AHYHSRWFLLFTGTLSHGTSAEAFPGLLLQFPGRSKKDSWHNCLKSDHGVMRCYYGT) are extracellular. A helical membrane pass occupies residues 2484 to 2504 (LFLLLATLGFRMLRATFLTVF). At 2505-2615 (QNRKSSHRKP…VSGPLAAESE (111 aa)) the chain is on the cytoplasmic side. Positions 2589-2615 (RAGDSPPVGSSEYQATGVSGPLAAESE) are disordered.

The protein belongs to the polycystin family. As to quaternary structure, heterodimer. Interacts with PKD2 to form a calcium channel. Interacts with PKD2L1; to form ciliary calcium channel. May interact with GNA12, GNAS, GNAI1 and GNAI2. As to expression, in testis, strong expression in Leydig cells, low level in seminal ducts, myoid cells and tunica vaginalis. Other tissues, including adrenal gland and heart myocardium, also show low expression. In embryo, highly expressed in the node.

It is found in the cell projection. The protein localises to the cilium membrane. In terms of biological role, component of a calcium-permeant ion channel formed by PKD1L2 and PKD1L1 in primary cilia, where it controls cilium calcium concentration, without affecting cytoplasmic calcium concentration, and regulates sonic hedgehog/SHH signaling and GLI2 transcription. The PKD1L1:PKD2L1 channel complex is mechanosensitive only at high pressures and is highly temperature sensitive. Also involved in left/right axis specification downstream of nodal flow by forming a complex with PKD2 in cilia to facilitate flow detection in left/right patterning. May function as a G-protein-coupled receptor. This chain is Polycystin-1-like protein 1, found in Mus musculus (Mouse).